A 622-amino-acid polypeptide reads, in one-letter code: Iron transport multicopper oxidase FET3 (622 aa).

The N-terminal stretch at 1-22 is a signal peptide; that stretch reads MRPKLLSVEAALFLALPELARA. Topologically, residues 23-553 are extracellular; that stretch reads ATRKFDFEIG…NTLPPGFTPR (531 aa). Plastocyanin-like domains are found at residues 31–146, 156–303, and 363–498; these read IGWV…VHDK, EEVV…VYDK, and YTEA…VEDP. An N-linked (GlcNAc...) asparagine glycan is attached at Asn-76. His-82 and His-84 together coordinate Cu cation. Residues Asn-89 and Asn-114 are each glycosylated (N-linked (GlcNAc...) asparagine). Cu cation-binding residues include His-126 and His-128. Residues Asn-196, Asn-200, and Asn-294 are each glycosylated (N-linked (GlcNAc...) asparagine). Cu cation contacts are provided by His-414, His-417, and His-419. A glycan (N-linked (GlcNAc...) asparagine) is linked at Asn-440. Residues His-479, Cys-480, His-481, and His-485 each contribute to the Cu cation site. Residues 554 to 574 traverse the membrane as a helical segment; the sequence is GIVALVFSCICGILGVAVVAW. The Cytoplasmic segment spans residues 575 to 622; it reads YGFSAPVGSTSAGALSAGLVENDSGDVHSAQKGPQETVVSPTGDARSH. Positions 597 to 622 are disordered; it reads DSGDVHSAQKGPQETVVSPTGDARSH.

The protein belongs to the multicopper oxidase family.

The protein localises to the cell membrane. Cell surface ferroxidase; part of the reductive iron assimilatory system (RIA), a siderophore-independent iron acquisition process. Required to oxidize Fe(2+) and release it from the transporter. Seems not to be involved in virulence. The sequence is that of Iron transport multicopper oxidase FET3 from Gibberella zeae (strain ATCC MYA-4620 / CBS 123657 / FGSC 9075 / NRRL 31084 / PH-1) (Wheat head blight fungus).